The sequence spans 284 residues: Bifunctional protein FolD (284 aa).

NADP(+)-binding positions include 166 to 168 (GAS), S191, and I232.

Belongs to the tetrahydrofolate dehydrogenase/cyclohydrolase family. In terms of assembly, homodimer.

The enzyme catalyses (6R)-5,10-methylene-5,6,7,8-tetrahydrofolate + NADP(+) = (6R)-5,10-methenyltetrahydrofolate + NADPH. The catalysed reaction is (6R)-5,10-methenyltetrahydrofolate + H2O = (6R)-10-formyltetrahydrofolate + H(+). The protein operates within one-carbon metabolism; tetrahydrofolate interconversion. In terms of biological role, catalyzes the oxidation of 5,10-methylenetetrahydrofolate to 5,10-methenyltetrahydrofolate and then the hydrolysis of 5,10-methenyltetrahydrofolate to 10-formyltetrahydrofolate. The chain is Bifunctional protein FolD from Thiobacillus denitrificans (strain ATCC 25259 / T1).